Reading from the N-terminus, the 953-residue chain is ALS2 C-terminal-like protein (953 aa).

MORN repeat units lie at residues 358 to 380, 381 to 403, 409 to 431, 432 to 452, 459 to 479, 483 to 505, 506 to 528, and 529 to 552; these read YEGEWCRGRPHGKGTLKWPDGRN, HVGNFCQGLEHGFGIRLLPQASE, YKCHWREGSMCGYGICEYSTDEV, YKGYFQEGLRHGFGVLESGPQ, YTGHWERGQRSGYGIEEDGDR, YIGMWQAGQRHGPGVMVTQAGVC, YQGTFQADKTVGPGILLSEDDSL, and YEGTFTRDLTLMGKGKVTFPNGFT. Residues 796–942 enclose the VPS9 domain; the sequence is LFPDTQLLEF…IQKEDMRLHR (147 aa).

As to quaternary structure, homodimer. Forms a heteromeric complex with ALS2. Interacts with ALS2 and RAB5A. As to expression, expressed in heart and kidney.

The protein resides in the cytoplasm. Functionally, acts as a guanine nucleotide exchange factor (GEF) for Rab5 GTPase. Regulates the ALS2-mediated endosome dynamics. The polypeptide is ALS2 C-terminal-like protein (ALS2CL) (Homo sapiens (Human)).